Here is a 473-residue protein sequence, read N- to C-terminus: Glutamate-1-semialdehyde 2,1-aminomutase, chloroplastic (473 aa).

A chloroplast-targeting transit peptide spans 1–37; the sequence is MSATLTGSGTALGFSCSSKISKRVSSSPSTRCSIKMS. K313 is modified (N6-(pyridoxal phosphate)lysine).

This sequence belongs to the class-III pyridoxal-phosphate-dependent aminotransferase family. HemL subfamily. As to quaternary structure, homodimer. The cofactor is pyridoxal 5'-phosphate.

Its subcellular location is the plastid. The protein localises to the chloroplast. The catalysed reaction is (S)-4-amino-5-oxopentanoate = 5-aminolevulinate. Its pathway is porphyrin-containing compound metabolism; protoporphyrin-IX biosynthesis; 5-aminolevulinate from L-glutamyl-tRNA(Glu): step 2/2. It functions in the pathway porphyrin-containing compound metabolism; chlorophyll biosynthesis. This chain is Glutamate-1-semialdehyde 2,1-aminomutase, chloroplastic (GSA), found in Brassica napus (Rape).